The chain runs to 204 residues: Recombination protein RecR (204 aa).

Residues 61-76 form a C4-type zinc finger; that stretch reads CACCNTFSETQVCSTC. The Toprim domain occupies 84–183; it reads SLLCIVETPA…KVTRIARGIP (100 aa).

Belongs to the RecR family.

In terms of biological role, may play a role in DNA repair. It seems to be involved in an RecBC-independent recombinational process of DNA repair. It may act with RecF and RecO. In Polynucleobacter necessarius subsp. necessarius (strain STIR1), this protein is Recombination protein RecR.